The sequence spans 157 residues: 2-C-methyl-D-erythritol 2,4-cyclodiphosphate synthase (157 aa).

Asp8 and His10 together coordinate a divalent metal cation. 4-CDP-2-C-methyl-D-erythritol 2-phosphate contacts are provided by residues Asp8–His10 and His34–Ser35. A divalent metal cation is bound at residue His42. Residues Asp56 to Gly58, Phe61 to Asp65, Ala100 to Ala106, Thr132 to Glu135, Phe139, and Arg142 contribute to the 4-CDP-2-C-methyl-D-erythritol 2-phosphate site.

This sequence belongs to the IspF family. Homotrimer. Requires a divalent metal cation as cofactor.

The enzyme catalyses 4-CDP-2-C-methyl-D-erythritol 2-phosphate = 2-C-methyl-D-erythritol 2,4-cyclic diphosphate + CMP. It functions in the pathway isoprenoid biosynthesis; isopentenyl diphosphate biosynthesis via DXP pathway; isopentenyl diphosphate from 1-deoxy-D-xylulose 5-phosphate: step 4/6. Its function is as follows. Involved in the biosynthesis of isopentenyl diphosphate (IPP) and dimethylallyl diphosphate (DMAPP), two major building blocks of isoprenoid compounds. Catalyzes the conversion of 4-diphosphocytidyl-2-C-methyl-D-erythritol 2-phosphate (CDP-ME2P) to 2-C-methyl-D-erythritol 2,4-cyclodiphosphate (ME-CPP) with a corresponding release of cytidine 5-monophosphate (CMP). The chain is 2-C-methyl-D-erythritol 2,4-cyclodiphosphate synthase from Geobacter sulfurreducens (strain ATCC 51573 / DSM 12127 / PCA).